Reading from the N-terminus, the 332-residue chain is GTP 3',8-cyclase (332 aa).

Positions 9–220 constitute a Radical SAM core domain; the sequence is RFARKVDYLR…DQVRERIAER (212 aa). R18 is a GTP binding site. [4Fe-4S] cluster is bound by residues C25 and C29. An S-adenosyl-L-methionine-binding site is contributed by Y31. C32 contacts [4Fe-4S] cluster. R67 contacts GTP. G71 contributes to the S-adenosyl-L-methionine binding site. T98 contributes to the GTP binding site. S122 lines the S-adenosyl-L-methionine pocket. A GTP-binding site is contributed by K159. Residue M193 coordinates S-adenosyl-L-methionine. C258 and C261 together coordinate [4Fe-4S] cluster. 263 to 265 provides a ligand contact to GTP; sequence RVR. [4Fe-4S] cluster is bound at residue C275.

Belongs to the radical SAM superfamily. MoaA family. Monomer and homodimer. Requires [4Fe-4S] cluster as cofactor.

The enzyme catalyses GTP + AH2 + S-adenosyl-L-methionine = (8S)-3',8-cyclo-7,8-dihydroguanosine 5'-triphosphate + 5'-deoxyadenosine + L-methionine + A + H(+). The protein operates within cofactor biosynthesis; molybdopterin biosynthesis. Its function is as follows. Catalyzes the cyclization of GTP to (8S)-3',8-cyclo-7,8-dihydroguanosine 5'-triphosphate. The sequence is that of GTP 3',8-cyclase from Pseudomonas syringae pv. syringae (strain B728a).